Here is a 418-residue protein sequence, read N- to C-terminus: D-amino acid dehydrogenase (418 aa).

Position 3–17 (3–17 (VLILGSGVVGVATAY)) interacts with FAD.

This sequence belongs to the DadA oxidoreductase family. Requires FAD as cofactor.

It catalyses the reaction a D-alpha-amino acid + A + H2O = a 2-oxocarboxylate + AH2 + NH4(+). The protein operates within amino-acid degradation; D-alanine degradation; NH(3) and pyruvate from D-alanine: step 1/1. In terms of biological role, oxidative deamination of D-amino acids. This is D-amino acid dehydrogenase from Granulibacter bethesdensis (strain ATCC BAA-1260 / CGDNIH1).